An 84-amino-acid polypeptide reads, in one-letter code: M-zodatoxin-Lt2b (84 aa).

Residues 1–22 (MKYFVIALALAVALVCIAESTA) form the signal peptide. A propeptide spanning residues 23–58 (YEVNEELENELDDLDDAAWLAVAEELQGLEDFEESR) is cleaved from the precursor. A Processing quadruplet motif motif is present at residues 55–58 (EESR).

Cleavage of the propeptide depends on the processing quadruplet motif (XXXR, with at least one of X being E). In terms of tissue distribution, expressed by the venom gland.

It is found in the secreted. Has antimicrobial activity against both Gram-positive and Gram-negative bacteria, and yeasts. Also has a strong hemolytic activity against rabbit erythrocytes. Causes paralysis, but is not lethal when injected into insect (M.domestica) larvae. The sequence is that of M-zodatoxin-Lt2b from Lachesana tarabaevi (Spider).